The following is a 184-amino-acid chain: GTP-binding protein Rheb (184 aa).

A Glycyl lysine isopeptide (Lys-Gly) (interchain with G-Cter in ubiquitin) cross-link involves residue Lys8. GDP-binding residues include Ser16, Val17, Gly18, Lys19, Ser20, Ser21, Val32, and Asp33. Ser16 serves as a coordination point for GTP. Residues Gly18, Lys19, Ser20, Ser21, and Val32 each contribute to the GTP site. Ser20 lines the Mg(2+) pocket. Tyr35, Thr38, Asn119, and Asp122 together coordinate GTP. Positions 35-43 match the Effector region motif; the sequence is YDPTIENTF. Thr38 provides a ligand contact to Mg(2+). Asn119 and Asp122 together coordinate GDP. Ser130 bears the Phosphoserine; by MAPKAPK5 mark. Ala150 contacts GDP. Residue Ala150 participates in GTP binding. Cys181 is modified (cysteine methyl ester). The S-farnesyl cysteine moiety is linked to residue Cys181. Positions 182-184 are cleaved as a propeptide — removed in mature form; that stretch reads SVM.

This sequence belongs to the small GTPase superfamily. Rheb family. As to quaternary structure, associates with the mTORC1 complex (MTOR, MLST8 and RPTOR) in a guanyl nucleotide-independent manner. Interacts with TSC2. Interacts with MCRS1; the interaction maintains RHEB at the lysosome in its active GTP-bound form and prevents its interaction with the mTORC1 complex inhibitor TSC2, ensuring activation of the mTORC1 complex by RHEB. Interacts (when prenylated) with PDE6D; this promotes release from membranes. In terms of processing, farnesylation is important for efficiently activating mTORC1-mediated signaling. Post-translationally, polyubiquitinated in response to amino acid, promoting its interaction with MTOR and mTORC1 activation. Deubiquitination by ATXN3 promotes recruitment of the TSC-TBC complex and RHEB inactivation by TSC2. Monoubiquitinated at Lys-8 by RNF152, promoting its association with the TSC-TBC complex. Deubiquitinated at Lys-8 by USP4, promoting mTORC1 activation. Phosphorylation by MAPKAPK5 impairs GTP-binding and inactivation. Ubiquitous. Highest levels observed in skeletal and cardiac muscle.

The protein localises to the endomembrane system. The protein resides in the lysosome membrane. Its subcellular location is the golgi apparatus membrane. It localises to the endoplasmic reticulum membrane. It is found in the cytoplasm. The protein localises to the cytosol. It catalyses the reaction GTP + H2O = GDP + phosphate + H(+). With respect to regulation, alternates between an inactive form bound to GDP and an active form bound to GTP. Inactivated by the TSC-TBC complex via the GTPase activating protein (GAP) domain of TSC2. Autoinhibited by Tyr-35, which constrains the active site conformation, restricting the access of the catalytic Asp-65 to the nucleotide-binding pocket. Specifically inhibited by NR1 (4-bromo-6-(3,4-dichlorophenylthio)-1-(4-(dimethylcarbamoyl)benzyl)-1H-indole-2-carboxylic acid). In terms of biological role, small GTPase that acts as an allosteric activator of the canonical mTORC1 complex, an evolutionarily conserved central nutrient sensor that stimulates anabolic reactions and macromolecule biosynthesis to promote cellular biomass generation and growth. In response to nutrients, growth factors or amino acids, specifically activates the protein kinase activity of MTOR, the catalytic component of the mTORC1 complex: acts by causing a conformational change that allows the alignment of residues in the active site of MTOR, thereby enhancing the phosphorylation of ribosomal protein S6 kinase (RPS6KB1 and RPS6KB2) and EIF4EBP1 (4E-BP1). RHEB is also required for localization of the TSC-TBC complex to lysosomal membranes. In response to starvation, RHEB is inactivated by the TSC-TBC complex, preventing activation of mTORC1. Has low intrinsic GTPase activity. This chain is GTP-binding protein Rheb, found in Homo sapiens (Human).